We begin with the raw amino-acid sequence, 860 residues long: MNNPSTPKAPLADYLAHLPLAEEERARLGESASFSELHARLAGEGAASEAGGDPALASVRARLQLGSPELDDAEMFGVDAQGRTFLKISPPIRRTKVIPEPWRTNILVRGWRRLTGRSNPPKPKRALPRARWQRVGSLRRFILLLLMLAQTSVATYYMKGILPYQGWAFVDLEELTRQSLLDTVQQVLPYVIQFGILALFAILFCWVSAGFWTALMGFWELLTGRDRYRISGSSAGSEPIAADARTAIVMPICNEDVPRVFAGLRATVESMAATGEMERFDFFVLSDTNDPDIAVAEQQAWLELCRETRGFGKIFYRRRRRRVKRKSGNIDDFCRRWGGDYRYMVVMDADSVMSGDCLAKLVRLMEANPEAGIIQTAPKASGMDTLYARMQQFATRVYGPLFTAGLHFWQLGESHYWGHNAIIRMQPFIDHCALAPLPGKGSFAGAILSHDFVEAALMRRAGWGVWIAYDLDGSYEELPPNLLDELKRDRRWCHGNLMNFRLFLVKGMHPVHRAVFLTGVMSYLSAPLWFFFLVLSTALLAVHQLMEPQYFLEPRQLFPIWPQWHPEKAIALFSTTLTLLFLPKLLSVMLIWAKGAKGFGGVIRVTLSMLLEMFFSVLLAPVRMLFHTRFVLAAFLGWSVQWNSPQRDDDATPWSEAIRRHGMQTLLGLAWTLLVAWLNPRFLWWLSPIVGSLMLSIPVSVISSRVKLGLRARDEKLFLIPEEYDTPRELRATDEYTYENRWHALKDGFLKAAVDPLLNALACAMGTARHNRAQAIETVRGERIGKAIEKGPEQLDGATRLALLSDPVALSRLHAQVWEENRDDWLGRWRKAEADDPHAASVPLAQVVPGDAGLLPAAQS.

Transmembrane regions (helical) follow at residues 141–161, 187–207, 515–535, 572–592, 599–619, and 682–702; these read FILLLLMLAQTSVATYYMKGI, VLPYVIQFGILALFAILFCWV, VFLTGVMSYLSAPLWFFFLVL, LFSTTLTLLFLPKLLSVMLIW, FGGVIRVTLSMLLEMFFSVLL, and FLWWLSPIVGSLMLSIPVSVI.

Belongs to the glycosyltransferase 2 family. OpgH subfamily.

The protein resides in the cell inner membrane. It participates in glycan metabolism; osmoregulated periplasmic glucan (OPG) biosynthesis. Functionally, involved in the biosynthesis of osmoregulated periplasmic glucans (OPGs). The polypeptide is Glucans biosynthesis glucosyltransferase H (Pseudomonas paraeruginosa (strain DSM 24068 / PA7) (Pseudomonas aeruginosa (strain PA7))).